A 1064-amino-acid chain; its full sequence is Rab GTPase-activating protein 1 (1064 aa).

Residues 1–101 form a disordered region; that stretch reads MDDKASVGKI…SNQLSASSTI (101 aa). The span at 7–22 shows a compositional bias: low complexity; it reads VGKISVSSDSVSTLNS. Phosphoserine is present on serine 42. Polar residues predominate over residues 91-101; the sequence is LSNQLSASSTI. The PID domain occupies 137–293; that stretch reads EDSVVFNKLT…IFTFSVSLEI (157 aa). Serine 355 carries the phosphoserine modification. The interval 478 to 520 is disordered; that stretch reads RERRKTTASPSVRLPQSGSQSSMIPSPPEDDEEEDNDEPLLSG. Polar residues predominate over residues 484–501; that stretch reads TASPSVRLPQSGSQSSMI. Positions 505–515 are enriched in acidic residues; the sequence is PEDDEEEDNDE. The 187-residue stretch at 561 to 747 folds into the Rab-GAP TBC domain; the sequence is GVPEALRGEV…HIIDLLLCEG (187 aa). The stretch at 805 to 1038 forms a coiled coil; sequence SQKKLKKFEK…HLGLALSEVQ (234 aa). Position 991 is a phosphothreonine (threonine 991).

Interacts with RAB6A and tubulin gamma.

The protein localises to the cytoplasm. It localises to the cytosol. The protein resides in the cytoskeleton. Its subcellular location is the microtubule organizing center. It is found in the centrosome. Functionally, may act as a GTPase-activating protein of RAB6A. May play a role in microtubule nucleation by centrosome. May participate in a RAB6A-mediated pathway involved in the metaphase-anaphase transition. This Mus musculus (Mouse) protein is Rab GTPase-activating protein 1.